Reading from the N-terminus, the 671-residue chain is Probable potassium transport system protein Kup 2 (671 aa).

A run of 12 helical transmembrane segments spans residues 18-38 (GFLI…LYAM), 60-80 (VSLV…LIAL), 103-123 (WLIV…ALTP), 149-169 (VTTL…ASLV), 173-193 (FGPI…INSF), 218-238 (AGFF…ALYS), 252-272 (WPFV…WLLA), 292-312 (MVIY…QALI), 343-363 (LYIP…VLYF), 373-393 (YSLA…YFLI), 402-422 (IAFI…ASLV), and 424-444 (FING…VMFI).

The protein belongs to the HAK/KUP transporter (TC 2.A.72) family.

It is found in the cell membrane. The enzyme catalyses K(+)(in) + H(+)(in) = K(+)(out) + H(+)(out). In terms of biological role, transport of potassium into the cell. Likely operates as a K(+):H(+) symporter. The protein is Probable potassium transport system protein Kup 2 of Lactococcus lactis subsp. cremoris (strain SK11).